A 234-amino-acid chain; its full sequence is Sugar fermentation stimulation protein homolog (234 aa).

This sequence belongs to the SfsA family.

This Enterobacter sp. (strain 638) protein is Sugar fermentation stimulation protein homolog.